The following is a 485-amino-acid chain: Peroxisomal catalase (485 aa).

Residues H53 and N126 contribute to the active site. Y336 provides a ligand contact to heme.

The protein belongs to the catalase family. In terms of assembly, homotetramer. It depends on heme as a cofactor.

The protein resides in the peroxisome matrix. The catalysed reaction is 2 H2O2 = O2 + 2 H2O. Its function is as follows. Catalyzes the degradation of hydrogen peroxide (H(2)O(2)) generated by peroxisomal oxidases to water and oxygen, thereby protecting cells from the toxic effects of hydrogen peroxide. This is Peroxisomal catalase (POX9) from Candida tropicalis (Yeast).